The primary structure comprises 416 residues: Gamma-glutamyl phosphate reductase (416 aa).

Belongs to the gamma-glutamyl phosphate reductase family.

The protein resides in the cytoplasm. The catalysed reaction is L-glutamate 5-semialdehyde + phosphate + NADP(+) = L-glutamyl 5-phosphate + NADPH + H(+). It functions in the pathway amino-acid biosynthesis; L-proline biosynthesis; L-glutamate 5-semialdehyde from L-glutamate: step 2/2. Functionally, catalyzes the NADPH-dependent reduction of L-glutamate 5-phosphate into L-glutamate 5-semialdehyde and phosphate. The product spontaneously undergoes cyclization to form 1-pyrroline-5-carboxylate. The polypeptide is Gamma-glutamyl phosphate reductase (Streptococcus pyogenes serotype M4 (strain MGAS10750)).